The chain runs to 214 residues: Probable nicotinate-nucleotide adenylyltransferase (214 aa).

Belongs to the NadD family.

It catalyses the reaction nicotinate beta-D-ribonucleotide + ATP + H(+) = deamido-NAD(+) + diphosphate. It participates in cofactor biosynthesis; NAD(+) biosynthesis; deamido-NAD(+) from nicotinate D-ribonucleotide: step 1/1. Functionally, catalyzes the reversible adenylation of nicotinate mononucleotide (NaMN) to nicotinic acid adenine dinucleotide (NaAD). The sequence is that of Probable nicotinate-nucleotide adenylyltransferase from Pseudomonas aeruginosa (strain UCBPP-PA14).